A 535-amino-acid polypeptide reads, in one-letter code: MDVKAEAPNGPAPVKNENQNQPKPQRENMNMNKNQNQNQNNNMGGGGGPNKRNNMNMNKNFQNRGGKGGPGMGPRGPMKNEDFIVNSKLKNLAGPTHDLPELVCEEIKFSGRNRLYIGNLTSDVTEEELKELFSPYGEISEAFINAEKNFAFLKIDYRANAERAKKDLDGRMRKNKPIRIRFAPNATTIRVKNLTPFVSNELLFKSFEVFGQVERAVIIVDDRGKTTGEGIVEFARKSGAMSALKYCSEKCYFLTSSLRPCVVETFDHIDETDGFPEKSLMRKSNDYYKARQNGPRFAEMGSFEHEFGTKWKQMYDMYKQKHDALKREMQLEEEKLEAQMEYAKFEHETESLREQLRKREQDRDRQKKEWEDRERQADESRIRDEQQMRRQQDDMQMRMQRQDEEMRRRQQENSLFMQAQQLSNMLDQQEMNHQGGGGGGGNGGNGNNQGGGGNQGGGRRNYNNDRNNDRNQNFDMMNQGGGNHGGNQYQGNQHYQGNQDQGNRFDGPPQRGNVRPWNNNDRGHRDDFQNKRRRY.

Residues 1–80 (MDVKAEAPNG…GMGPRGPMKN (80 aa)) are disordered. Composition is skewed to low complexity over residues 27–42 (ENMN…QNNN) and 50–64 (NKRN…FQNR). Positions 65 to 74 (GGKGGPGMGP) are enriched in gly residues. RRM domains lie at 113–185 (NRLY…FAPN) and 187–268 (TTIR…TFDH). 2 disordered regions span residues 346-411 (EHET…RRQQ) and 429-535 (QEMN…RRRY). The segment covering 434 to 459 (QGGGGGGGNGGNGNNQGGGGNQGGGR) has biased composition (gly residues). The segment covering 486 to 502 (GNQYQGNQHYQGNQDQG) has biased composition (low complexity). Residues 521 to 535 (DRGHRDDFQNKRRRY) are compositionally biased toward basic and acidic residues.

The protein localises to the cytoplasm. It localises to the cytoskeleton. Its subcellular location is the nucleus. Component of nuclear connecting fibers associated with the transport of ribonucleoprotein particles from either the chromosome to the nuclear pore complex or their transient retention in the nucleoplasm. The polypeptide is Hrp65 protein (HRP65) (Chironomus tentans (Midge)).